The primary structure comprises 234 residues: CD-NTase-associated protein 13 (234 aa).

Residues 20 to 42 (TIMKNVIANVSTAITLALMILWI) form a helical membrane-spanning segment.

This sequence in the C-terminal section; belongs to the bacterial STING family.

The protein localises to the cell inner membrane. Effector protein of a CBASS antivirus system. CBASS (cyclic oligonucleotide-based antiphage signaling system) provides immunity against bacteriophage. The CD-NTase protein synthesizes cyclic nucleotides in response to infection; these serve as specific second messenger signals. The signals activate a diverse range of effectors, leading to bacterial cell death and thus abortive phage infection. A type I-D CBASS(GG) system. Its function is as follows. Binds c-di-GMP (synthesized by the cognate CdnE encoded upstream in the same operon) and about 10-fold less well 3'3'-cGAMP, but not c-di-AMP, 2'3'-cGAMP or cUMP-AMP (tested with a protein without the transmembrane region). The effector protein for this CBASS system, its activity is stimulated by c-di-GMP and leads to cell death. This Roseivirga ehrenbergii (strain DSM 102268 / JCM 13514 / KCTC 12282 / NCIMB 14502 / KMM 6017) protein is CD-NTase-associated protein 13.